The sequence spans 995 residues: S1 RNA-binding domain-containing protein 1 (995 aa).

The interval 23-81 (SFSELSSASEEDDKEDSAWEPQKKVPRSRKQPPPKESKPKRMPRVKKNAPQISDGSEVV) is disordered. Residues Lys84 and Lys134 each participate in a glycyl lysine isopeptide (Lys-Gly) (interchain with G-Cter in SUMO2) cross-link. The tract at residues 120-165 (CAAQPHTVRRTKKLKVEEETSKASNLEGESNSSETPSTSTVWGGTC) is disordered. Over residues 146-159 (EGESNSSETPSTST) the composition is skewed to low complexity. Residues Lys166, Lys167, and Lys183 each participate in a glycyl lysine isopeptide (Lys-Gly) (interchain with G-Cter in SUMO2) cross-link. Residue Lys185 forms a Glycyl lysine isopeptide (Lys-Gly) (interchain with G-Cter in SUMO1); alternate linkage. Residue Lys185 forms a Glycyl lysine isopeptide (Lys-Gly) (interchain with G-Cter in SUMO2); alternate linkage. Residues 258 to 288 (ADSLREVQQTLEELRAVAKKVHSTIQKIKKE) adopt a coiled-coil conformation. Phosphoserine is present on Ser861. The region spanning 919 to 992 (GTVLTGKVEN…PRSRITLDLI (74 aa)) is the S1 motif domain. A Glycyl lysine isopeptide (Lys-Gly) (interchain with G-Cter in SUMO2) cross-link involves residue Lys955. At Ser964 the chain carries Phosphoserine.

The sequence is that of S1 RNA-binding domain-containing protein 1 (SRBD1) from Homo sapiens (Human).